The following is a 598-amino-acid chain: Autophagy-related protein 22-1 (598 aa).

The tract at residues 1-20 (MEDGGAGLRAPRYPAEDTSP) is disordered. Residues 28-48 (GFFCYGLAAEVFAVCAVGSFL) form a helical membrane-spanning segment. N-linked (GlcNAc...) asparagine glycosylation is found at Asn-74 and Asn-80. 3 helical membrane passes run 111-131 (SFAM…LVSV), 159-179 (FLLV…ICVV), and 182-202 (GCSF…HPVV). A disordered region spans residues 207–238 (DHPTASSSIPLQPISPQRSSRKSEESLHQVNR). The segment covering 212–224 (SSSIPLQPISPQR) has biased composition (low complexity). Over residues 227–238 (RKSEESLHQVNR) the composition is skewed to basic and acidic residues. A helical membrane pass occupies residues 263 to 283 (VGIGYMAAVSVQVICILILYI). An N-linked (GlcNAc...) asparagine glycan is attached at Asn-285. 7 helical membrane passes run 297–317 (TVLF…VMWL), 363–383 (VLLF…ISAT), 400–420 (ALLS…WPII), 431–451 (IIVC…LGFL), 465–485 (WYEI…LSSY), 489–509 (FYGL…FAIT), and 534–554 (AFGF…MVDV). The disordered stretch occupies residues 575–598 (HEDFESFEGSSDGHEAEGLMRDHD). The span at 585–598 (SDGHEAEGLMRDHD) shows a compositional bias: basic and acidic residues.

It belongs to the ATG22 family.

It is found in the vacuole membrane. Functionally, vacuolar effluxer which mediate the efflux of amino acids resulting from autophagic degradation. The release of autophagic amino acids allows the maintenance of protein synthesis and viability during nitrogen starvation. This chain is Autophagy-related protein 22-1 (atg22-1), found in Sclerotinia sclerotiorum (strain ATCC 18683 / 1980 / Ss-1) (White mold).